We begin with the raw amino-acid sequence, 423 residues long: Probable histone-binding protein rbbD (423 aa).

6 WD repeats span residues 119–159 (NHEG…LEPT), 172–212 (GHKK…KSDS), 222–262 (GHTS…KPIH), 266–306 (AHNS…NRLH), 310–350 (SHTD…EEQN), and 367–407 (GHTS…YNDR).

Belongs to the WD repeat RBAP46/RBAP48/MSI1 family. As to quaternary structure, probably binds directly to helix 1 of the histone fold of histone H4, a region that is not accessible when H4 is in chromatin.

The protein resides in the nucleus. Core histone-binding subunit that may target chromatin assembly factors, chromatin remodeling factors and histone deacetylases to their histone substrates in a manner that is regulated by nucleosomal DNA. Component of several complexes which regulate chromatin metabolism. In Dictyostelium discoideum (Social amoeba), this protein is Probable histone-binding protein rbbD (rbbD).